Here is a 233-residue protein sequence, read N- to C-terminus: LexA repressor (233 aa).

The segment at residues 26–46 (FEEMKEALDLKSKSGVHRLIS) is a DNA-binding region (H-T-H motif). Residues Ser-153 and Lys-191 each act as for autocatalytic cleavage activity in the active site.

It belongs to the peptidase S24 family. As to quaternary structure, homodimer.

It carries out the reaction Hydrolysis of Ala-|-Gly bond in repressor LexA.. Its function is as follows. Represses a number of genes involved in the response to DNA damage (SOS response), including recA and lexA. In the presence of single-stranded DNA, RecA interacts with LexA causing an autocatalytic cleavage which disrupts the DNA-binding part of LexA, leading to derepression of the SOS regulon and eventually DNA repair. The chain is LexA repressor from Erythrobacter litoralis (strain HTCC2594).